Consider the following 216-residue polypeptide: 3-isopropylmalate dehydratase small subunit (216 aa).

Belongs to the LeuD family. LeuD type 1 subfamily. As to quaternary structure, heterodimer of LeuC and LeuD.

The catalysed reaction is (2R,3S)-3-isopropylmalate = (2S)-2-isopropylmalate. Its pathway is amino-acid biosynthesis; L-leucine biosynthesis; L-leucine from 3-methyl-2-oxobutanoate: step 2/4. In terms of biological role, catalyzes the isomerization between 2-isopropylmalate and 3-isopropylmalate, via the formation of 2-isopropylmaleate. This Acidovorax ebreus (strain TPSY) (Diaphorobacter sp. (strain TPSY)) protein is 3-isopropylmalate dehydratase small subunit.